Consider the following 558-residue polypeptide: MKPFIEFKDFSFKYDAQAEPTLKEITLSIEKGEKVLIIGPSGSGKSTIGHCLNGIIPNIYKGQAEGSLTIDGKDVFDLSIYEKSHLVSTVLQDPDGQFIGLTVAEDLAFALENDCVAHETMFERVDTWADKLDLKELLQHRPQDLSGGQKQRVSLAGVMIDESPVLLFDEPLANLDPKSGQDTIDLIDHLHQTAETTTIIIEHRLEDVLYRPVDRVILINEGQVLFNGSPNDLLKTSLLQENGIREPLYVTVLRHLGLDIKNTSHLANLEQLDLSGVSFAGDISLKEPQEPQVLFDIQHLNFAYSSERPILKNLSFTLNKGERLAIVGKNGAGKSTLAKALCQFISYAGQIFYQGQDIASDSIKERSERIGYVLQNPNQMISQTMIFDEVALGLRLRGVDDSQIEKRVLKVLKTCGLYEFRKWPISALSFGQKKRVTIASILVLNPEVILLDEPTAGQDKKHYTEMMSFLNDLHALGHTIIMITHDMQLMLEYSDRALVISDGQILADQSPITLFNQPDILRIANLKQTSIFDLAQRLNCDPIALTHYYIDQQGGEDE.

ABC transporter domains are found at residues 5–246 and 295–527; these read IEFK…GIRE and FDIQ…ANLK. ATP is bound by residues 39–46 and 328–335; these read GPSGSGKS and GKNGAGKS.

This sequence belongs to the ABC transporter superfamily.

The protein resides in the cell membrane. In terms of biological role, probably part of an ABC transporter complex. Responsible for energy coupling to the transport system. The chain is Putative ABC transporter ATP-binding protein SMU_1934c (sdcBA) from Streptococcus mutans serotype c (strain ATCC 700610 / UA159).